Reading from the N-terminus, the 94-residue chain is Integration host factor subunit beta (94 aa).

This sequence belongs to the bacterial histone-like protein family. Heterodimer of an alpha and a beta chain.

Its function is as follows. This protein is one of the two subunits of integration host factor, a specific DNA-binding protein that functions in genetic recombination as well as in transcriptional and translational control. The protein is Integration host factor subunit beta of Brucella melitensis biotype 2 (strain ATCC 23457).